Here is a 301-residue protein sequence, read N- to C-terminus: Polyamine aminopropyltransferase (301 aa).

A PABS domain is found at 4–240 (WHWLLEWQTP…GLWGFVYGGV (237 aa)). Gln-33 lines the S-methyl-5'-thioadenosine pocket. Positions 64 and 89 each coordinate spermidine. S-methyl-5'-thioadenosine contacts are provided by residues Asp-109 and 141-142 (DG). Residue Asp-159 is the Proton acceptor of the active site.

It belongs to the spermidine/spermine synthase family. As to quaternary structure, homotrimer.

It is found in the cytoplasm. It catalyses the reaction S-adenosyl 3-(methylsulfanyl)propylamine + putrescine = S-methyl-5'-thioadenosine + spermidine + H(+). It carries out the reaction S-adenosyl 3-(methylsulfanyl)propylamine + propane-1,3-diamine = norspermidine + S-methyl-5'-thioadenosine + H(+). The enzyme catalyses norspermidine + S-adenosyl 3-(methylsulfanyl)propylamine = norspermine + S-methyl-5'-thioadenosine + H(+). The catalysed reaction is S-adenosyl 3-(methylsulfanyl)propylamine + spermidine = thermospermine + S-methyl-5'-thioadenosine + H(+). The protein operates within amine and polyamine biosynthesis; spermidine biosynthesis; spermidine from putrescine: step 1/1. With respect to regulation, competitively inhibited by 5-methylthioadenosine, 5-methylthiotubercidin, S-adenosyl(5)-3-thiopropylamine and S-adenosyl-3-thio-l,8-diaminooctane. Involved in the biosynthesis of polyamines which are thought to support the growth of thermophilic microorganisms under high-temperature conditions. It seems that long-chain and branched-chain of polyamines effectively stabilize DNA and RNA, respectively. Catalyzes the irreversible transfer of a propylamine group from the amino donor S-adenosylmethioninamine (decarboxy-AdoMet) to various amine acceptors such as putrescine (1,4-diaminobutane), 1,3-diaminopropane, sym-norspermidine and spermidine. The biosynthesis of caldopentamine from norspermine has been also observed, but with a very low activity. The reaction involves a nucleophilic attack on the C-3 methylene of the propylamine moiety adjacent to the positively charged sulfur of decarboxy-AdoMet. S-adenosylmethioninamine is the only amino donor. This is Polyamine aminopropyltransferase from Saccharolobus solfataricus (strain ATCC 35092 / DSM 1617 / JCM 11322 / P2) (Sulfolobus solfataricus).